Consider the following 294-residue polypeptide: Elongation factor Ts (294 aa).

The involved in Mg(2+) ion dislocation from EF-Tu stretch occupies residues 79 to 82 (TDFV).

Belongs to the EF-Ts family.

The protein localises to the cytoplasm. Its function is as follows. Associates with the EF-Tu.GDP complex and induces the exchange of GDP to GTP. It remains bound to the aminoacyl-tRNA.EF-Tu.GTP complex up to the GTP hydrolysis stage on the ribosome. In Shouchella clausii (strain KSM-K16) (Alkalihalobacillus clausii), this protein is Elongation factor Ts.